The chain runs to 52 residues: Large ribosomal subunit protein bL32c (52 aa).

Belongs to the bacterial ribosomal protein bL32 family.

Its subcellular location is the plastid. The protein localises to the chloroplast. The polypeptide is Large ribosomal subunit protein bL32c (Lobularia maritima (Sweet alyssum)).